A 103-amino-acid chain; its full sequence is Large ribosomal subunit protein eL43 (103 aa).

Belongs to the eukaryotic ribosomal protein eL43 family.

This chain is Large ribosomal subunit protein eL43 (RPL37A), found in Tetrahymena thermophila (strain SB210).